Consider the following 1524-residue polypeptide: DNA-directed RNA polymerase subunit beta' (1524 aa).

Zn(2+) contacts are provided by C58, C60, C73, and C76. Residues D739, D741, and D743 each coordinate Mg(2+). Zn(2+) is bound by residues C1112, C1194, C1201, and C1204. The segment at 1501-1524 (EAVEAKERPAARRGVKREQPGKQA) is disordered.

This sequence belongs to the RNA polymerase beta' chain family. As to quaternary structure, the RNAP catalytic core consists of 2 alpha, 1 beta, 1 beta' and 1 omega subunit. When a sigma factor is associated with the core the holoenzyme is formed, which can initiate transcription. Mg(2+) is required as a cofactor. It depends on Zn(2+) as a cofactor.

The catalysed reaction is RNA(n) + a ribonucleoside 5'-triphosphate = RNA(n+1) + diphosphate. DNA-dependent RNA polymerase catalyzes the transcription of DNA into RNA using the four ribonucleoside triphosphates as substrates. This Thermus thermophilus (strain ATCC BAA-163 / DSM 7039 / HB27) protein is DNA-directed RNA polymerase subunit beta'.